The chain runs to 950 residues: Valine--tRNA ligase (950 aa).

A 'HIGH' region motif is present at residues 40-50 (PNVTGSLHMGH). The 'KMSKS' region motif lies at 551 to 555 (KMSKS). Lysine 554 contacts ATP. A coiled-coil region spans residues 881-950 (LIDKSAELGR…AEQRQKIAAL (70 aa)).

This sequence belongs to the class-I aminoacyl-tRNA synthetase family. ValS type 1 subfamily. In terms of assembly, monomer.

The protein resides in the cytoplasm. The enzyme catalyses tRNA(Val) + L-valine + ATP = L-valyl-tRNA(Val) + AMP + diphosphate. In terms of biological role, catalyzes the attachment of valine to tRNA(Val). As ValRS can inadvertently accommodate and process structurally similar amino acids such as threonine, to avoid such errors, it has a 'posttransfer' editing activity that hydrolyzes mischarged Thr-tRNA(Val) in a tRNA-dependent manner. The polypeptide is Valine--tRNA ligase (Pseudomonas aeruginosa (strain ATCC 15692 / DSM 22644 / CIP 104116 / JCM 14847 / LMG 12228 / 1C / PRS 101 / PAO1)).